We begin with the raw amino-acid sequence, 346 residues long: D-alanine--D-alanine ligase (346 aa).

In terms of domain architecture, ATP-grasp spans 133-327 (KLYAKSVGVK…TLADQIPLEK (195 aa)). 159-211 (LRFPCIIKPARLGSSIGISIVKDEKDLEYAKDVGFEFDNDLVVEEFKNNIKEY) provides a ligand contact to ATP. Mg(2+)-binding residues include D284, E296, and N298.

This sequence belongs to the D-alanine--D-alanine ligase family. It depends on Mg(2+) as a cofactor. Mn(2+) is required as a cofactor.

Its subcellular location is the cytoplasm. The enzyme catalyses 2 D-alanine + ATP = D-alanyl-D-alanine + ADP + phosphate + H(+). It functions in the pathway cell wall biogenesis; peptidoglycan biosynthesis. Its function is as follows. Cell wall formation. In Campylobacter jejuni subsp. doylei (strain ATCC BAA-1458 / RM4099 / 269.97), this protein is D-alanine--D-alanine ligase.